Reading from the N-terminus, the 74-residue chain is Mitotic-spindle organizing protein 1 (74 aa).

The protein belongs to the MOZART1 family. In terms of assembly, part of the gamma-tubulin complex.

The protein localises to the cytoplasm. It is found in the cytoskeleton. It localises to the microtubule organizing center. The protein resides in the spindle pole body. Its function is as follows. Required for gamma-tubulin complex recruitment to the microtubule organizing center (MTOC). The chain is Mitotic-spindle organizing protein 1 from Emericella nidulans (strain FGSC A4 / ATCC 38163 / CBS 112.46 / NRRL 194 / M139) (Aspergillus nidulans).